Consider the following 95-residue polypeptide: Protein TusB (95 aa).

This sequence belongs to the DsrH/TusB family. In terms of assembly, heterohexamer, formed by a dimer of trimers. The hexameric TusBCD complex contains 2 copies each of TusB, TusC and TusD. The TusBCD complex interacts with TusE.

The protein resides in the cytoplasm. Functionally, part of a sulfur-relay system required for 2-thiolation of 5-methylaminomethyl-2-thiouridine (mnm(5)s(2)U) at tRNA wobble positions. The chain is Protein TusB from Salmonella agona (strain SL483).